The chain runs to 343 residues: Anthranilate phosphoribosyltransferase (343 aa).

5-phospho-alpha-D-ribose 1-diphosphate is bound by residues glycine 77, 80 to 81 (GD), threonine 85, 87 to 90 (NVST), 105 to 113 (KHGNRSSSG), and serine 117. Position 77 (glycine 77) interacts with anthranilate. Serine 89 contacts Mg(2+). Asparagine 108 is an anthranilate binding site. Anthranilate is bound at residue arginine 163. Mg(2+) contacts are provided by aspartate 222 and glutamate 223.

This sequence belongs to the anthranilate phosphoribosyltransferase family. As to quaternary structure, homodimer. It depends on Mg(2+) as a cofactor.

It catalyses the reaction N-(5-phospho-beta-D-ribosyl)anthranilate + diphosphate = 5-phospho-alpha-D-ribose 1-diphosphate + anthranilate. The protein operates within amino-acid biosynthesis; L-tryptophan biosynthesis; L-tryptophan from chorismate: step 2/5. Functionally, catalyzes the transfer of the phosphoribosyl group of 5-phosphorylribose-1-pyrophosphate (PRPP) to anthranilate to yield N-(5'-phosphoribosyl)-anthranilate (PRA). This chain is Anthranilate phosphoribosyltransferase, found in Cenarchaeum symbiosum (strain A).